We begin with the raw amino-acid sequence, 201 residues long: MELSLKDASGALEVSEATFGREFNEALVHQVVVAYAAGARQGTRAQKTRSEVSGGGAKPWRQKGTGRARAGTTRGPIWRTGGVTFAAKPQDHSQKVNRKMYRGAIASILSELVRQERLVVVENFSVETPKTKELVAKLKGLELKDVLIVTKEVDENLFLSARNLYKVDVRDVAAIDPVSLVGFEKVLITADAVKEIEGILA.

The disordered stretch occupies residues 43-73 (TRAQKTRSEVSGGGAKPWRQKGTGRARAGTT).

It belongs to the universal ribosomal protein uL4 family. As to quaternary structure, part of the 50S ribosomal subunit.

One of the primary rRNA binding proteins, this protein initially binds near the 5'-end of the 23S rRNA. It is important during the early stages of 50S assembly. It makes multiple contacts with different domains of the 23S rRNA in the assembled 50S subunit and ribosome. In terms of biological role, forms part of the polypeptide exit tunnel. This Colwellia psychrerythraea (strain 34H / ATCC BAA-681) (Vibrio psychroerythus) protein is Large ribosomal subunit protein uL4.